The following is a 253-amino-acid chain: MKTIDLNCDSGESFGAYKMGNDDEILPFVSSINVACGFHAGDPSVMRQTIEKAMQHNVAIGAHPGFPDLIGFGRRNMNVSASEVYDYVLYQIGALDGFVKVAGGKMHHVKPHGALYNMAATNPEIADAIAKAIYHINPSLLLYGLANSEAFIQAAVKYNITLVQEAFADRTYKQDGTLTSRTEENALIKNEEEAIKQVLQMVKEGYVSAVNGEKVAVQAQTICLHGDGEKALQFAKRIYRTFEHDGISICAPK.

The protein belongs to the LamB/PxpA family. Forms a complex composed of PxpA, PxpB and PxpC.

The catalysed reaction is 5-oxo-L-proline + ATP + 2 H2O = L-glutamate + ADP + phosphate + H(+). Its function is as follows. Catalyzes the cleavage of 5-oxoproline to form L-glutamate coupled to the hydrolysis of ATP to ADP and inorganic phosphate. The polypeptide is 5-oxoprolinase subunit A (Bacillus cereus (strain B4264)).